We begin with the raw amino-acid sequence, 352 residues long: Replication factor C subunit 5 (352 aa).

The protein belongs to the activator 1 small subunits family. Heteropentamer of subunits rfc1, rfc2, rfc3, rfc4 and rfc5 that forms a complex with PCNA in the presence of ATP.

Its subcellular location is the nucleus. The elongation of primed DNA templates by DNA polymerase delta and epsilon requires the action of the accessory proteins proliferating cell nuclear antigen (PCNA) and activator 1. This chain is Replication factor C subunit 5, found in Neurospora crassa (strain ATCC 24698 / 74-OR23-1A / CBS 708.71 / DSM 1257 / FGSC 987).